The following is a 67-amino-acid chain: Stomoxyn (67 aa).

The signal sequence occupies residues 1 to 24 (MNFYKYLVVLVVLVLCLSATQTEA). Threonine amide is present on T66.

Constitutively expressed in the adult anterior midgut; proventriculus, thoracic and reservoir regions.

Its subcellular location is the secreted. Its function is as follows. Has antimicrobial activity against most Gram-positive and Gram-negative bacteria, filamentous fungi and yeasts tested. Has trypanolytic effect on T.b.rhodesiense and limited hemolytic activity against bovine red blood cells. Functionally, may play an important role in protecting the stored blood in the anterior midgut from microorganisms prior to digestion. Adopts an amphipathic alpha-helical structure only in the presence of an organic solvent that mimics a phospholipid membrane. In Stomoxys calcitrans (Stable fly), this protein is Stomoxyn.